The following is a 2291-amino-acid chain: Protein Ycf2 A (2291 aa).

1642–1649 is an ATP binding site; sequence GSIGTGRS.

It belongs to the Ycf2 family.

It is found in the plastid. The protein localises to the chloroplast stroma. Its function is as follows. Probable ATPase of unknown function. Its presence in a non-photosynthetic plant (Epifagus virginiana) and experiments in tobacco indicate that it has an essential function which is probably not related to photosynthesis. This is Protein Ycf2 A (ycf2-A) from Atropa belladonna (Belladonna).